A 523-amino-acid chain; its full sequence is Frizzled-4 (523 aa).

The signal sequence occupies residues Met-1–Gly-22. The Extracellular segment spans residues Phe-23–Asn-198. Residues Glu-26–Gly-147 enclose the FZ domain. 8 cysteine pairs are disulfide-bonded: Cys-31–Cys-92, Cys-39–Cys-85, Cys-76–Cys-114, Cys-103–Cys-144, Cys-107–Cys-131, Cys-167–Cys-186, Cys-190–Cys-268, and Cys-288–Cys-363. A glycan (N-linked (GlcNAc...) asparagine) is linked at Asn-45. N-linked (GlcNAc...) asparagine glycosylation occurs at Asn-130. Residues Arg-199 to Ile-229 form a helical membrane-spanning segment. At Asp-230–Cys-235 the chain is on the cytoplasmic side. A helical transmembrane segment spans residues Tyr-236–Val-261. Residues Gly-262–Asn-285 lie on the Extracellular side of the membrane. The helical transmembrane segment at Thr-286–Leu-319 threads the bilayer. Over Lys-320–Gly-322 the chain is Cytoplasmic. A helical membrane pass occupies residues His-323 to Met-351. Residues Arg-352–Asn-369 lie on the Extracellular side of the membrane. Residues Ile-370–Leu-396 form a helical membrane-spanning segment. Topologically, residues Val-397 to Glu-417 are cytoplasmic. The helical transmembrane segment at Arg-418–Tyr-443 threads the bilayer. The Extracellular segment spans residues Glu-444–Asn-459. The chain crosses the membrane as a helical span at residues Met-460–Ile-481. At Trp-482–Val-523 the chain is on the cytoplasmic side. Residues Lys-485–Trp-490 carry the Lys-Thr-X-X-X-Trp motif, mediates interaction with the PDZ domain of Dvl family members motif. The PDZ-binding signature appears at Thr-521–Val-523.

Belongs to the G-protein coupled receptor Fz/Smo family. As to quaternary structure, interacts (via FZ domain) with tsku; tsku competes with wnt2b for binding to fzd4, inhibiting Wnt signaling and repressing peripheral eye development.

It is found in the cell membrane. Receptor for Wnt proteins. Most frizzled receptors are coupled to the beta-catenin canonical signaling pathway, which leads to the activation of disheveled proteins, inhibition of GSK-3 kinase, nuclear accumulation of beta-catenin and activation of Wnt target genes. A second signaling pathway involving PKC and calcium fluxes has been seen for some family members, but it is not yet clear if it represents a distinct pathway or if it can be integrated in the canonical pathway, as PKC seems to be required for Wnt-mediated inactivation of GSK-3 kinase. Both pathways seem to involve interactions with G-proteins. May be involved in transduction and intercellular transmission of polarity information during tissue morphogenesis and/or in differentiated tissues. Activated by Wnt5A. This is Frizzled-4 (fzd4) from Xenopus laevis (African clawed frog).